A 657-amino-acid chain; its full sequence is KNR4/SMI1 homolog (657 aa).

3 disordered regions span residues Glu-168–Tyr-193, Ser-366–Ser-402, and Leu-416–Leu-657. A compositionally biased stretch (polar residues) spans Lys-174–Ala-187. Polar residues predominate over residues Leu-416 to Thr-436. 2 stretches are compositionally biased toward low complexity: residues Ser-444–Ala-455 and Thr-473–Pro-482. Residues Leu-492–Arg-504 show a composition bias toward basic and acidic residues. Residues Ala-505–Thr-521 are compositionally biased toward polar residues. 3 stretches are compositionally biased toward basic and acidic residues: residues Lys-535–Glu-561, Val-569–Val-604, and Lys-627–Glu-650.

This sequence belongs to the KNR4/SMI1 family.

This chain is KNR4/SMI1 homolog, found in Eremothecium gossypii (strain ATCC 10895 / CBS 109.51 / FGSC 9923 / NRRL Y-1056) (Yeast).